The chain runs to 487 residues: Rhoptry apical surface protein 1 (487 aa).

Residues 337 to 487 (EVAMSGRGGH…EEEQPLLFTQ (151 aa)) form a disordered region. Basic and acidic residues-rich tracts occupy residues 385–399 (DGIR…DRRA) and 454–475 (EKNE…GVEY).

In terms of assembly, interacts with RASP2.

It is found in the cytoplasmic vesicle. It localises to the secretory vesicle. The protein resides in the rhoptry membrane. The chain is Rhoptry apical surface protein 1 from Toxoplasma gondii (strain ATCC 50853 / GT1).